The primary structure comprises 188 residues: ATP synthase subunit b 1 (188 aa).

A helical transmembrane segment spans residues 35 to 55 (VHFGSHLFWLAISFGLFYLFI).

It belongs to the ATPase B chain family. In terms of assembly, F-type ATPases have 2 components, F(1) - the catalytic core - and F(0) - the membrane proton channel. F(1) has five subunits: alpha(3), beta(3), gamma(1), delta(1), epsilon(1). F(0) has three main subunits: a(1), b(2) and c(10-14). The alpha and beta chains form an alternating ring which encloses part of the gamma chain. F(1) is attached to F(0) by a central stalk formed by the gamma and epsilon chains, while a peripheral stalk is formed by the delta and b chains.

The protein resides in the cell inner membrane. In terms of biological role, f(1)F(0) ATP synthase produces ATP from ADP in the presence of a proton or sodium gradient. F-type ATPases consist of two structural domains, F(1) containing the extramembraneous catalytic core and F(0) containing the membrane proton channel, linked together by a central stalk and a peripheral stalk. During catalysis, ATP synthesis in the catalytic domain of F(1) is coupled via a rotary mechanism of the central stalk subunits to proton translocation. Functionally, component of the F(0) channel, it forms part of the peripheral stalk, linking F(1) to F(0). This Bartonella henselae (strain ATCC 49882 / DSM 28221 / CCUG 30454 / Houston 1) (Rochalimaea henselae) protein is ATP synthase subunit b 1.